The chain runs to 221 residues: Carbonic anhydrase (221 aa).

Residues C57, D59, H112, and C115 each contribute to the Zn(2+) site.

This sequence belongs to the beta-class carbonic anhydrase family. Zn(2+) is required as a cofactor.

The protein localises to the cytoplasm. Its subcellular location is the nucleus. It is found in the mitochondrion intermembrane space. The enzyme catalyses hydrogencarbonate + H(+) = CO2 + H2O. Functionally, catalyzes the reversible hydration of CO(2) to H(2)CO(3). The main role may be to provide inorganic carbon for the bicarbonate-dependent carboxylation reactions catalyzed by pyruvate carboxylase, acetyl-CoA carboxylase and carbamoyl-phosphate synthetase. Involved in protection against oxidative damage. Encodes a substrate for the non-classical protein export pathway for proteins that lack a cleavable signal sequence. This chain is Carbonic anhydrase (NCE103), found in Saccharomyces cerevisiae (strain ATCC 204508 / S288c) (Baker's yeast).